A 215-amino-acid polypeptide reads, in one-letter code: Probable nicotinate-nucleotide adenylyltransferase (215 aa).

The protein belongs to the NadD family.

It catalyses the reaction nicotinate beta-D-ribonucleotide + ATP + H(+) = deamido-NAD(+) + diphosphate. The protein operates within cofactor biosynthesis; NAD(+) biosynthesis; deamido-NAD(+) from nicotinate D-ribonucleotide: step 1/1. Its function is as follows. Catalyzes the reversible adenylation of nicotinate mononucleotide (NaMN) to nicotinic acid adenine dinucleotide (NaAD). The sequence is that of Probable nicotinate-nucleotide adenylyltransferase from Coxiella burnetii (strain RSA 331 / Henzerling II).